The following is a 252-amino-acid chain: 5-oxoprolinase subunit A (252 aa).

It belongs to the LamB/PxpA family. Forms a complex composed of PxpA, PxpB and PxpC.

It carries out the reaction 5-oxo-L-proline + ATP + 2 H2O = L-glutamate + ADP + phosphate + H(+). Functionally, catalyzes the cleavage of 5-oxoproline to form L-glutamate coupled to the hydrolysis of ATP to ADP and inorganic phosphate. In Mycolicibacterium gilvum (strain PYR-GCK) (Mycobacterium gilvum (strain PYR-GCK)), this protein is 5-oxoprolinase subunit A.